A 253-amino-acid chain; its full sequence is Triosephosphate isomerase (253 aa).

Position 9 to 11 (asparagine 9 to lysine 11) interacts with substrate. The Electrophile role is filled by histidine 95. The active-site Proton acceptor is glutamate 167. Substrate-binding positions include glycine 173, serine 213, and glycine 234 to glycine 235. Serine 213 carries the phosphoserine modification.

It belongs to the triosephosphate isomerase family. In terms of assembly, homodimer.

It localises to the cytoplasm. It catalyses the reaction D-glyceraldehyde 3-phosphate = dihydroxyacetone phosphate. It functions in the pathway carbohydrate biosynthesis; gluconeogenesis. Its pathway is carbohydrate degradation; glycolysis; D-glyceraldehyde 3-phosphate from glycerone phosphate: step 1/1. Functionally, involved in the gluconeogenesis. Catalyzes stereospecifically the conversion of dihydroxyacetone phosphate (DHAP) to D-glyceraldehyde-3-phosphate (G3P). The protein is Triosephosphate isomerase of Bacillus licheniformis (strain ATCC 14580 / DSM 13 / JCM 2505 / CCUG 7422 / NBRC 12200 / NCIMB 9375 / NCTC 10341 / NRRL NRS-1264 / Gibson 46).